Reading from the N-terminus, the 230-residue chain is Protein FAM3A (230 aa).

An N-terminal signal peptide occupies residues 1–33; sequence MRLAGPLRIVALIIIMGLTWILVTILLGGPGVG. Disulfide bonds link Cys59-Cys87 and Cys65-Cys222. Residues 68 to 226 enclose the GG-type lectin domain; that stretch reads EHLSFRIVSG…LEMEGCIPRR (159 aa).

Belongs to the FAM3 family.

Its subcellular location is the secreted. The protein is Protein FAM3A (Fam3a) of Mus musculus (Mouse).